A 711-amino-acid polypeptide reads, in one-letter code: MKFFASCAKGLEYLLADELLALGASKATATISGVNVEGELRDAQRAVLWSRLASRVLWPLSEFDCPDEDALYAGVAELPWDAHLSVGHTLSVDAHVSGTAITHARYAAQRIKDAVVDTMRRQGLERPSVDVESPDLRLNLSLRKGRATISVDLGGGPLHRRGWRMAQNEAPLKENLAAAVLMRGGWPRAYADGGGLLDPMCGSGTLLIEGALMAADVAPGLQRYGSDLPSRWRGFDRNGWQQLVSEARERDSVGRAALKQVIHGSDMDPHAIRAAKENAQVAGVAEAIWFGVCEVGELQTPPQATGVVVCNPPYDERLAADAALYRRLGDTLQCAVPQWRASLLCGNAELAYATGLRAGKKYQLFNGAIECALIVCDPIAVPRRTPLAAPTALSEGAQMVANRLRKNLQKFKKWRAREGVECFRAYDADLPEYSAAIDVYQQADGDRRIFLHVQEYAAPATIPEADVRRRLNELLAAAREVFEVPAERVALKSRERGKGGSKYGRFEQRNEIVHVREHGALLRVNLFDYLDTGLFLDHRPLRGTMAQQSRGRRFLNLFCYTGVASVEAAVAGAASTTSVDLSGTYLQWCADNLALNGLAGSKHKLVQADALAWLEAERAHFDVIFCDPPTFSNSARAEDFDIQRAHVRLLRAAVARLAPGGVLYFSNNFRRFKLDEEGVAEFAQCEDISPSTIDPDFERHARIHRAWRLTA.

Residues 42–153 (DAQRAVLWSR…KGRATISVDL (112 aa)) enclose the THUMP domain.

It belongs to the methyltransferase superfamily. RlmKL family.

Its subcellular location is the cytoplasm. The catalysed reaction is guanosine(2445) in 23S rRNA + S-adenosyl-L-methionine = N(2)-methylguanosine(2445) in 23S rRNA + S-adenosyl-L-homocysteine + H(+). It carries out the reaction guanosine(2069) in 23S rRNA + S-adenosyl-L-methionine = N(2)-methylguanosine(2069) in 23S rRNA + S-adenosyl-L-homocysteine + H(+). Its function is as follows. Specifically methylates the guanine in position 2445 (m2G2445) and the guanine in position 2069 (m7G2069) of 23S rRNA. The sequence is that of Ribosomal RNA large subunit methyltransferase K/L from Xanthomonas oryzae pv. oryzae (strain KACC10331 / KXO85).